We begin with the raw amino-acid sequence, 453 residues long: tRNA-2-methylthio-N(6)-dimethylallyladenosine synthase (453 aa).

The 115-residue stretch at 4–118 folds into the MTTase N-terminal domain; sequence KKFYIENYGC…IPNLINNFFK (115 aa). Residues Cys-13, Cys-49, Cys-83, Cys-156, Cys-160, and Cys-163 each coordinate [4Fe-4S] cluster. Residues 142–388 enclose the Radical SAM core domain; it reads EEKKITAFVT…NLQKTHSYYR (247 aa). The region spanning 390–453 is the TRAM domain; sequence RKYIGSIQDI…SATLVGDIYV (64 aa).

Belongs to the methylthiotransferase family. MiaB subfamily. Monomer. [4Fe-4S] cluster serves as cofactor.

The protein localises to the cytoplasm. It carries out the reaction N(6)-dimethylallyladenosine(37) in tRNA + (sulfur carrier)-SH + AH2 + 2 S-adenosyl-L-methionine = 2-methylsulfanyl-N(6)-dimethylallyladenosine(37) in tRNA + (sulfur carrier)-H + 5'-deoxyadenosine + L-methionine + A + S-adenosyl-L-homocysteine + 2 H(+). Its function is as follows. Catalyzes the methylthiolation of N6-(dimethylallyl)adenosine (i(6)A), leading to the formation of 2-methylthio-N6-(dimethylallyl)adenosine (ms(2)i(6)A) at position 37 in tRNAs that read codons beginning with uridine. The protein is tRNA-2-methylthio-N(6)-dimethylallyladenosine synthase of Karelsulcia muelleri (strain GWSS) (Sulcia muelleri).